A 110-amino-acid chain; its full sequence is uncharacterized protein (110 aa).

Disordered regions lie at residues 1 to 42 and 66 to 110; these read MEWG…RAQQ and RQLG…AAEP. Positions 36–68 form a coiled coil; the sequence is REERAQQLLDAVEQRQRQLLDTIAACEEMLRQL.

This is an uncharacterized protein from Homo sapiens (Human).